The chain runs to 160 residues: SsrA-binding protein (160 aa).

Belongs to the SmpB family.

It is found in the cytoplasm. Functionally, required for rescue of stalled ribosomes mediated by trans-translation. Binds to transfer-messenger RNA (tmRNA), required for stable association of tmRNA with ribosomes. tmRNA and SmpB together mimic tRNA shape, replacing the anticodon stem-loop with SmpB. tmRNA is encoded by the ssrA gene; the 2 termini fold to resemble tRNA(Ala) and it encodes a 'tag peptide', a short internal open reading frame. During trans-translation Ala-aminoacylated tmRNA acts like a tRNA, entering the A-site of stalled ribosomes, displacing the stalled mRNA. The ribosome then switches to translate the ORF on the tmRNA; the nascent peptide is terminated with the 'tag peptide' encoded by the tmRNA and targeted for degradation. The ribosome is freed to recommence translation, which seems to be the essential function of trans-translation. This Escherichia coli O6:K15:H31 (strain 536 / UPEC) protein is SsrA-binding protein.